A 72-amino-acid chain; its full sequence is Small ribosomal subunit protein bS18 (72 aa).

This sequence belongs to the bacterial ribosomal protein bS18 family. As to quaternary structure, part of the 30S ribosomal subunit. Forms a tight heterodimer with protein bS6.

In terms of biological role, binds as a heterodimer with protein bS6 to the central domain of the 16S rRNA, where it helps stabilize the platform of the 30S subunit. This is Small ribosomal subunit protein bS18 from Francisella tularensis subsp. holarctica (strain OSU18).